The sequence spans 159 residues: Phosphopantetheine adenylyltransferase (159 aa).

A substrate-binding site is contributed by S9. ATP is bound by residues 9-10 and H17; that span reads SF. Positions 41, 74, and 88 each coordinate substrate. Residues 89–91, E99, and 123–129 each bind ATP; these read GLR and YGYISST.

Belongs to the bacterial CoaD family. In terms of assembly, homohexamer. Requires Mg(2+) as cofactor.

It localises to the cytoplasm. The enzyme catalyses (R)-4'-phosphopantetheine + ATP + H(+) = 3'-dephospho-CoA + diphosphate. The protein operates within cofactor biosynthesis; coenzyme A biosynthesis; CoA from (R)-pantothenate: step 4/5. Reversibly transfers an adenylyl group from ATP to 4'-phosphopantetheine, yielding dephospho-CoA (dPCoA) and pyrophosphate. This Corynebacterium diphtheriae (strain ATCC 700971 / NCTC 13129 / Biotype gravis) protein is Phosphopantetheine adenylyltransferase.